The sequence spans 294 residues: NAD kinase (294 aa).

The active-site Proton acceptor is Asp74. NAD(+)-binding positions include 74-75, 148-149, His159, Arg176, Asp178, 189-194, and Gln249; these read DG, NE, and TAYSLS.

Belongs to the NAD kinase family. A divalent metal cation is required as a cofactor.

The protein resides in the cytoplasm. It catalyses the reaction NAD(+) + ATP = ADP + NADP(+) + H(+). Functionally, involved in the regulation of the intracellular balance of NAD and NADP, and is a key enzyme in the biosynthesis of NADP. Catalyzes specifically the phosphorylation on 2'-hydroxyl of the adenosine moiety of NAD to yield NADP. The protein is NAD kinase of Vibrio atlanticus (strain LGP32) (Vibrio splendidus (strain Mel32)).